The following is a 187-amino-acid chain: Putative carbonic anhydrase YtiB (187 aa).

Cys38, Asp40, His96, and Cys99 together coordinate Zn(2+).

Belongs to the beta-class carbonic anhydrase family. Zn(2+) serves as cofactor.

It catalyses the reaction hydrogencarbonate + H(+) = CO2 + H2O. Reversible hydration of carbon dioxide. This Bacillus subtilis (strain 168) protein is Putative carbonic anhydrase YtiB (ytiB).